Consider the following 392-residue polypeptide: Caveolae-associated protein 1 (392 aa).

The residue at position 1 (Met-1) is an N-acetylmethionine. Positions 1 to 10 (MEDVTLHIVE) are enriched in basic and acidic residues. A disordered region spans residues 1 to 45 (MEDVTLHIVERPYSGYPDASSEGPEPTPGEARATEEPSGTGSDEL). The segment at 1–100 (MEDVTLHIVE…IQGELSKLGK (100 aa)) is required for homotrimerization and for interaction with CAVIN2 and CAVIN3. Phosphoserine is present on residues Ser-21 and Ser-38. Thr-40 carries the post-translational modification Phosphothreonine. Phosphoserine is present on residues Ser-42 and Ser-48. Positions 54–64 (VLVLSLLDKII) are nuclear export signal. The leucine-zipper 1 stretch occupies residues 55–77 (LVLSLLDKIIGAVDQIQLTQAQL). A Glycyl lysine isopeptide (Lys-Gly) (interchain with G-Cter in SUMO2) cross-link involves residue Lys-118. Position 120 is a phosphoserine (Ser-120). Lys-124 is covalently cross-linked (Glycyl lysine isopeptide (Lys-Gly) (interchain with G-Cter in SUMO2)). The tract at residues 138–154 (KKLEVNEAELLRRRNFK) is nuclear localization signal. Residue Tyr-158 is modified to Phosphotyrosine. A Glycyl lysine isopeptide (Lys-Gly) (interchain with G-Cter in SUMO1); alternate cross-link involves residue Lys-163. A Glycyl lysine isopeptide (Lys-Gly) (interchain with G-Cter in SUMO2); alternate cross-link involves residue Lys-163. A Glycyl lysine isopeptide (Lys-Gly) (interchain with G-Cter in SUMO2) cross-link involves residue Lys-167. Residues 168–188 (LSVSKSLKESEALPEKEGDEL) form a leucine-zipper 2 region. Ser-169 and Ser-171 each carry phosphoserine. Lys-172 participates in a covalent cross-link: Glycyl lysine isopeptide (Lys-Gly) (interchain with G-Cter in SUMO2). 2 positions are modified to phosphoserine: Ser-173 and Ser-177. Basic and acidic residues predominate over residues 173–183 (SLKESEALPEK). The disordered stretch occupies residues 173–198 (SLKESEALPEKEGDELGEGERPEEDA). Residues 184 to 198 (EGDELGEGERPEEDA) are compositionally biased toward acidic residues. Positions 201 to 284 (IELSSDEAVE…RMNKLGTRLV (84 aa)) form a coiled coil. Phosphoserine is present on residues Ser-204 and Ser-205. Positions 235-251 (KKAFSKEKMEKTKVRTR) are nuclear localization signal. Residues 259–299 (LKTKENLEKTRHTLEKRMNKLGTRLVPVERREKLKTSRDKL) are leucine-zipper 3. The residue at position 302 (Ser-302) is a Phosphoserine. Thr-304 bears the Phosphothreonine mark. Position 310 is a phosphotyrosine (Tyr-310). Residue Lys-328 forms a Glycyl lysine isopeptide (Lys-Gly) (interchain with G-Cter in SUMO2) linkage. The tract at residues 347-367 (GPDDDEVGAERGAETDLLRGS) is disordered. Residues 354–363 (GAERGAETDL) are compositionally biased toward basic and acidic residues. A phosphoserine mark is found at Ser-367, Ser-368, Ser-381, Ser-389, and Ser-391.

Belongs to the CAVIN family. In terms of assembly, component of the CAVIN complex composed of CAVIN1, CAVIN2, CAVIN3 and CAVIN4. Interacts with RNA polymerase I subunit POLR1A/RPA1 and TTF1. Binds the 3' end of pre-rRNA. Interacts with transcription factor ZNF148. Interacts with LIPE in the adipocyte cytoplasm. Interacts with CAV1, CAV3, CAVIN2, CAVIN3 and CAVIN4. In terms of processing, phosphorylated. Present in active and inactive forms. Changes in phosphorylation pattern may alter activity. Phosphorylation at Tyr-158 is essential for its function in the regulation of ribosomal transcriptional activity. Post-translationally, monoubiquitinated. In terms of tissue distribution, expressed in the adipocyte (at protein level). Expressed in all striated and smooth muscles tested including diaphragm, esophageal striated muscle, fibroblast, endocardial endothelium, epicardial mesothelium, intestinal smooth muscle, masseter, soleus muscle, vascular smooth muscle and white gastrocnemius muscle (at protein level). Expressed in the endothelium and perineural sheath (at protein level). Not expressed in hepatocytes.

It localises to the membrane. It is found in the caveola. The protein localises to the cell membrane. Its subcellular location is the microsome. The protein resides in the endoplasmic reticulum. It localises to the cytoplasm. It is found in the cytosol. The protein localises to the mitochondrion. Its subcellular location is the nucleus. Plays an important role in caveolae formation and organization. Essential for the formation of caveolae in all tissues. Core component of the CAVIN complex which is essential for recruitment of the complex to the caveolae in presence of calveolin-1 (CAV1). Essential for normal oligomerization of CAV1. Promotes ribosomal transcriptional activity in response to metabolic challenges in the adipocytes and plays an important role in the formation of the ribosomal transcriptional loop. Dissociates transcription complexes paused by DNA-bound TTF1, thereby releasing both RNA polymerase I and pre-RNA from the template. The caveolae biogenesis pathway is required for the secretion of proteins such as GASK1A. This Rattus norvegicus (Rat) protein is Caveolae-associated protein 1.